Consider the following 121-residue polypeptide: Immunoglobulin heavy variable 6-1 (121 aa).

A signal peptide spans 1 to 20 (MSVSFLIFLPVLGLPWGVLS). A framework-1 region spans residues 21-45 (QVQLQQSGPGLVKPSQTLSLTCAIS). The 101-residue stretch at 21–121 (QVQLQQSGPG…EDTAVYYCAR (101 aa)) folds into the Ig-like domain. A disulfide bond links C42 and C119. Residues 46–55 (GDSVSSNSAA) form a complementarity-determining-1 region. Residues 56 to 72 (WNWIRQSPSRGLEWLGR) form a framework-2 region. The segment at 73–81 (TYYRSKWYN) is complementarity-determining-2. A framework-3 region spans residues 82-119 (DYAVSVKSRITINPDTSKNQFSLQLNSVTPEDTAVYYC). The interval 120–121 (AR) is complementarity-determining-3.

Immunoglobulins are composed of two identical heavy chains and two identical light chains; disulfide-linked.

The protein resides in the secreted. It is found in the cell membrane. In terms of biological role, v region of the variable domain of immunoglobulin heavy chains that participates in the antigen recognition. Immunoglobulins, also known as antibodies, are membrane-bound or secreted glycoproteins produced by B lymphocytes. In the recognition phase of humoral immunity, the membrane-bound immunoglobulins serve as receptors which, upon binding of a specific antigen, trigger the clonal expansion and differentiation of B lymphocytes into immunoglobulins-secreting plasma cells. Secreted immunoglobulins mediate the effector phase of humoral immunity, which results in the elimination of bound antigens. The antigen binding site is formed by the variable domain of one heavy chain, together with that of its associated light chain. Thus, each immunoglobulin has two antigen binding sites with remarkable affinity for a particular antigen. The variable domains are assembled by a process called V-(D)-J rearrangement and can then be subjected to somatic hypermutations which, after exposure to antigen and selection, allow affinity maturation for a particular antigen. This Homo sapiens (Human) protein is Immunoglobulin heavy variable 6-1.